Here is a 429-residue protein sequence, read N- to C-terminus: Ribonuclease E/G-like protein (429 aa).

Mg(2+)-binding residues include D290 and D332.

The protein belongs to the RNase E/G family. Mg(2+) is required as a cofactor.

The protein resides in the plastid. Its subcellular location is the chloroplast stroma. Involved in intercistronic processing of primary transcripts from chloroplast operons. The endonucleolytic activity of the enzyme depends on the number of phosphates at the 5' end, is inhibited by structured RNA, and preferentially cleaves A/U-rich sequences. This is Ribonuclease E/G-like protein (rne) from Guillardia theta (Cryptophyte).